The following is a 693-amino-acid chain: Phosphoribosylformylglycinamidine synthase subunit PurL (693 aa).

H34 is a catalytic residue. Residues Y37 and K76 each coordinate ATP. A Mg(2+)-binding site is contributed by E78. Substrate contacts are provided by residues 79-82 and R101; that span reads SHNH. The Proton acceptor role is filled by H80. D102 lines the Mg(2+) pocket. Q222 provides a ligand contact to substrate. Position 248 (D248) interacts with Mg(2+). 292–294 provides a ligand contact to substrate; it reads ETQ. 2 residues coordinate ATP: D470 and G507. S510 provides a ligand contact to substrate.

The protein belongs to the FGAMS family. As to quaternary structure, monomer. Part of the FGAM synthase complex composed of 1 PurL, 1 PurQ and 2 PurS subunits.

It localises to the cytoplasm. It catalyses the reaction N(2)-formyl-N(1)-(5-phospho-beta-D-ribosyl)glycinamide + L-glutamine + ATP + H2O = 2-formamido-N(1)-(5-O-phospho-beta-D-ribosyl)acetamidine + L-glutamate + ADP + phosphate + H(+). The protein operates within purine metabolism; IMP biosynthesis via de novo pathway; 5-amino-1-(5-phospho-D-ribosyl)imidazole from N(2)-formyl-N(1)-(5-phospho-D-ribosyl)glycinamide: step 1/2. Part of the phosphoribosylformylglycinamidine synthase complex involved in the purines biosynthetic pathway. Catalyzes the ATP-dependent conversion of formylglycinamide ribonucleotide (FGAR) and glutamine to yield formylglycinamidine ribonucleotide (FGAM) and glutamate. The FGAM synthase complex is composed of three subunits. PurQ produces an ammonia molecule by converting glutamine to glutamate. PurL transfers the ammonia molecule to FGAR to form FGAM in an ATP-dependent manner. PurS interacts with PurQ and PurL and is thought to assist in the transfer of the ammonia molecule from PurQ to PurL. The sequence is that of Phosphoribosylformylglycinamidine synthase subunit PurL from Pyrobaculum neutrophilum (strain DSM 2338 / JCM 9278 / NBRC 100436 / V24Sta) (Thermoproteus neutrophilus).